A 354-amino-acid chain; its full sequence is Chorismate synthase (354 aa).

Arg-48 serves as a coordination point for NADP(+). Residues 125 to 127 (RAS), Ala-280, 295 to 299 (KPIPS), and Arg-321 each bind FMN.

The protein belongs to the chorismate synthase family. Homotetramer. The cofactor is FMNH2.

It catalyses the reaction 5-O-(1-carboxyvinyl)-3-phosphoshikimate = chorismate + phosphate. It participates in metabolic intermediate biosynthesis; chorismate biosynthesis; chorismate from D-erythrose 4-phosphate and phosphoenolpyruvate: step 7/7. Catalyzes the anti-1,4-elimination of the C-3 phosphate and the C-6 proR hydrogen from 5-enolpyruvylshikimate-3-phosphate (EPSP) to yield chorismate, which is the branch point compound that serves as the starting substrate for the three terminal pathways of aromatic amino acid biosynthesis. This reaction introduces a second double bond into the aromatic ring system. This chain is Chorismate synthase, found in Syntrophus aciditrophicus (strain SB).